The following is a 453-amino-acid chain: Bifunctional protein GlmU (453 aa).

The pyrophosphorylase stretch occupies residues 1–225 (MHAHVILAAG…AEEALGVNTR (225 aa)). UDP-N-acetyl-alpha-D-glucosamine contacts are provided by residues 7 to 10 (LAAG), lysine 21, glutamine 72, and 77 to 78 (GT). Mg(2+) is bound at residue aspartate 102. 4 residues coordinate UDP-N-acetyl-alpha-D-glucosamine: glycine 138, glutamate 152, asparagine 167, and asparagine 223. Asparagine 223 contacts Mg(2+). Residues 226 to 246 (EELARVEGVLLRRLRAEWMGK) are linker. The N-acetyltransferase stretch occupies residues 247-453 (GVRMILPETI…GYALRKLGEG (207 aa)). UDP-N-acetyl-alpha-D-glucosamine contacts are provided by arginine 329 and lysine 347. The Proton acceptor role is filled by histidine 359. UDP-N-acetyl-alpha-D-glucosamine is bound by residues tyrosine 362 and asparagine 373. Residues alanine 376, 382-383 (NY), serine 401, alanine 419, and arginine 436 contribute to the acetyl-CoA site.

In the N-terminal section; belongs to the N-acetylglucosamine-1-phosphate uridyltransferase family. This sequence in the C-terminal section; belongs to the transferase hexapeptide repeat family. Homotrimer. Mg(2+) serves as cofactor.

The protein localises to the cytoplasm. The catalysed reaction is alpha-D-glucosamine 1-phosphate + acetyl-CoA = N-acetyl-alpha-D-glucosamine 1-phosphate + CoA + H(+). It carries out the reaction N-acetyl-alpha-D-glucosamine 1-phosphate + UTP + H(+) = UDP-N-acetyl-alpha-D-glucosamine + diphosphate. The protein operates within nucleotide-sugar biosynthesis; UDP-N-acetyl-alpha-D-glucosamine biosynthesis; N-acetyl-alpha-D-glucosamine 1-phosphate from alpha-D-glucosamine 6-phosphate (route II): step 2/2. It participates in nucleotide-sugar biosynthesis; UDP-N-acetyl-alpha-D-glucosamine biosynthesis; UDP-N-acetyl-alpha-D-glucosamine from N-acetyl-alpha-D-glucosamine 1-phosphate: step 1/1. Its pathway is bacterial outer membrane biogenesis; LPS lipid A biosynthesis. Catalyzes the last two sequential reactions in the de novo biosynthetic pathway for UDP-N-acetylglucosamine (UDP-GlcNAc). The C-terminal domain catalyzes the transfer of acetyl group from acetyl coenzyme A to glucosamine-1-phosphate (GlcN-1-P) to produce N-acetylglucosamine-1-phosphate (GlcNAc-1-P), which is converted into UDP-GlcNAc by the transfer of uridine 5-monophosphate (from uridine 5-triphosphate), a reaction catalyzed by the N-terminal domain. The chain is Bifunctional protein GlmU from Thermus thermophilus (strain ATCC BAA-163 / DSM 7039 / HB27).